The sequence spans 293 residues: DOMON domain-containing protein FRRS1L (293 aa).

Residues 1 to 28 form the signal peptide; sequence MAGQPLRRPAWVPLLLRLLLAGIAACDA. Residues 29 to 60 form a disordered region; it reads SPADDSAGPGGRGPRGRARGDAGADEAVPRHD. Over residues 46–60 the composition is skewed to basic and acidic residues; that stretch reads ARGDAGADEAVPRHD. The region spanning 119 to 234 is the DOMON domain; that stretch reads CDYFLSYRMI…WYYLFAWGPA (116 aa). The chain crosses the membrane as a helical span at residues 271-291; the sequence is TFSSPFCLLLIVALTFYLLMG.

Component of the outer core of AMPAR complex. AMPAR complex consists of an inner core made of 4 pore-forming GluA/GRIA proteins (GRIA1, GRIA2, GRIA3 and GRIA4) and 4 major auxiliary subunits arranged in a twofold symmetry. One of the two pairs of distinct binding sites is occupied either by CNIH2, CNIH3 or CACNG2, CACNG3. The other harbors CACNG2, CACNG3, CACNG4, CACNG8 or GSG1L. This inner core of AMPAR complex is complemented by outer core constituents binding directly to the GluA/GRIA proteins at sites distinct from the interaction sites of the inner core constituents. Outer core constituents include at least PRRT1, PRRT2, CKAMP44/SHISA9, FRRS1L and NRN1. The proteins of the inner and outer core serve as a platform for other, more peripherally associated AMPAR constituents. Alone or in combination, these auxiliary subunits control the gating and pharmacology of the AMPAR complex and profoundly impact their biogenesis and protein processing. As to expression, expressed in the brain (at protein level). In embryos expression is evident in the ventral forebrain, but a lower level is seen in the remainder of the embryos. In the adult brain, expressed in the cortex, cerebellum, hippocampus and basal ganglia.

The protein resides in the cell membrane. It localises to the synapse. Its function is as follows. Important modulator of glutamate signaling pathway. In Mus musculus (Mouse), this protein is DOMON domain-containing protein FRRS1L (Frrs1l).